The sequence spans 467 residues: Mitochondrial distribution and morphology protein 10 (467 aa).

The tract at residues 361–393 is disordered; sequence GLPDTAPSRNRECDDLPPPRRDNYHHQRSPHAS. Positions 369–385 are enriched in basic and acidic residues; that stretch reads RNRECDDLPPPRRDNYH.

This sequence belongs to the MDM10 family. Component of the ER-mitochondria encounter structure (ERMES) or MDM complex, composed of MMM1, MDM10, MDM12 and MDM34. Associates with the mitochondrial outer membrane sorting assembly machinery SAM(core) complex.

The protein resides in the mitochondrion outer membrane. In terms of biological role, component of the ERMES/MDM complex, which serves as a molecular tether to connect the endoplasmic reticulum and mitochondria. Components of this complex are involved in the control of mitochondrial shape and protein biogenesis and may function in phospholipid exchange. MDM10 is involved in the late assembly steps of the general translocase of the mitochondrial outer membrane (TOM complex). Functions in the TOM40-specific route of the assembly of outer membrane beta-barrel proteins, including the association of TOM40 with the receptor TOM22 and small TOM proteins. Can associate with the SAM(core) complex as well as the MDM12-MMM1 complex, both involved in late steps of the major beta-barrel assembly pathway, that is responsible for biogenesis of all outer membrane beta-barrel proteins. May act as a switch that shuttles between both complexes and channels precursor proteins into the TOM40-specific pathway. Plays a role in mitochondrial morphology and in the inheritance of mitochondria. The polypeptide is Mitochondrial distribution and morphology protein 10 (Ajellomyces capsulatus (strain NAm1 / WU24) (Darling's disease fungus)).